Consider the following 505-residue polypeptide: Phosphoglycerate kinase A (505 aa).

V32, D33, F34, N35, R48, S70, H71, G73, R74, R224, H260, and R261 together coordinate (2R)-3-phosphoglycerate. ADP contacts are provided by G306 and A307. G306 is a binding site for CDP. Residues A307 and K308 each contribute to the AMP site. A307 provides a ligand contact to ATP. A307 lines the Mg(2+) pocket. Position 308 (K308) interacts with (2R)-3-phosphoglycerate. A CDP-binding site is contributed by E311. Residue E311 coordinates Mg(2+). K312 and G330 together coordinate ADP. K312 contacts AMP. An ATP-binding site is contributed by K312. G330 is a CDP binding site. Positions 331 and 403 each coordinate AMP. The ATP site is built by A331 and A403. Residues A403 and N427 each coordinate ADP. Residues G428 and F433 each contribute to the CDP site. Positions 433, 434, 466, and 467 each coordinate ADP. E434 is an AMP binding site. ATP-binding residues include E434, E466, and S467. E466 contributes to the Mg(2+) binding site.

The protein belongs to the phosphoglycerate kinase family. In terms of assembly, monomer. Requires Mg(2+) as cofactor.

It carries out the reaction (2R)-3-phosphoglycerate + ATP = (2R)-3-phospho-glyceroyl phosphate + ADP. The protein operates within carbohydrate degradation; glycolysis; pyruvate from D-glyceraldehyde 3-phosphate: step 2/5. This chain is Phosphoglycerate kinase A, found in Trypanosoma brucei brucei.